An 85-amino-acid chain; its full sequence is MVQQKVEVRLKTGLQARPAALFVQEANRFTSDVFLEKDGKKVNAKSIMGLMSLAVSTGTEVTLIAQGEDEQEALEKLAAYVQEEV.

Positions 1-85 (MVQQKVEVRL…KLAAYVQEEV (85 aa)) constitute an HPr domain. S46 is subject to Phosphoserine; by HPrK/P.

It belongs to the HPr family. In terms of assembly, mixture of monomers and homodimers. Interacts with CcpA as a monomer.

Its function is as follows. Along with seryl-phosphorylated HPr, phosphorylated Crh is implicated in carbon catabolite repression (CCR) of levanase, inositol dehydrogenase, and beta-xylosidase. Exerts its effect on CCR by interacting with CcpA. This is HPr-like protein Crh (crh) from Bacillus subtilis (strain 168).